Reading from the N-terminus, the 524-residue chain is L-tyrosine:2-oxoglutarate aminotransferase atrD (524 aa).

It belongs to the class-I pyridoxal-phosphate-dependent aminotransferase family. The cofactor is pyridoxal 5'-phosphate.

It catalyses the reaction L-tyrosine + 2-oxoglutarate = 3-(4-hydroxyphenyl)pyruvate + L-glutamate. It participates in secondary metabolite biosynthesis. Its function is as follows. The L-tyrosine:2-oxoglutarate aminotransferase atrD and the atromentin synthetase atrA catalyze consecutive steps to turn over L-tyrosine into atromentin, which represents the generic precursor molecule for the entire terphenylquinone and pulvinic acid family of pigments, which are widely distributed secondary metabolites in homobasidiomycetes. The first step is catalyzed by atrD which converts L-tyrosine in to 4-hydroxyphenylpyruvate (4-HPP). Adenylation of two 4-HPP monomers by the atrA adenylation (A) domain, ester bond formation between monomers and atrA, and symmetric C-C-bond formation between two monomers by atrA leads to atromentin. This Tapinella panuoides (Oyster rollrim mushroom) protein is L-tyrosine:2-oxoglutarate aminotransferase atrD.